The chain runs to 429 residues: Adenylosuccinate synthetase (429 aa).

Residues 12-18 (GDEGKGK) and 40-42 (GHT) contribute to the GTP site. The active-site Proton acceptor is aspartate 13. Mg(2+) is bound by residues aspartate 13 and glycine 40. Residues 13-16 (DEGK), 38-41 (NAGH), threonine 129, arginine 143, glutamine 223, threonine 238, and arginine 302 contribute to the IMP site. Histidine 41 acts as the Proton donor in catalysis. A substrate-binding site is contributed by 298 to 304 (VVTGRKR). Residues arginine 304, 330–332 (KLD), and 412–414 (STS) each bind GTP.

This sequence belongs to the adenylosuccinate synthetase family. In terms of assembly, homodimer. Requires Mg(2+) as cofactor.

The protein resides in the cytoplasm. The catalysed reaction is IMP + L-aspartate + GTP = N(6)-(1,2-dicarboxyethyl)-AMP + GDP + phosphate + 2 H(+). It functions in the pathway purine metabolism; AMP biosynthesis via de novo pathway; AMP from IMP: step 1/2. Functionally, plays an important role in the de novo pathway of purine nucleotide biosynthesis. Catalyzes the first committed step in the biosynthesis of AMP from IMP. The polypeptide is Adenylosuccinate synthetase (Brucella suis (strain ATCC 23445 / NCTC 10510)).